The following is a 198-amino-acid chain: Bcl-2-like protein 11 (198 aa).

The interval 1-72 (MAKQPSDVSS…PLAPPASPGP (72 aa)) is disordered. The residue at position 69 (Ser69) is a Phosphoserine; by MAPK. Ser77, Ser87, and Ser94 each carry phosphoserine. Residues 148-162 (IAQELRRIGDEFNAY) carry the BH3 motif.

It belongs to the Bcl-2 family. As to quaternary structure, forms heterodimers with a number of antiapoptotic Bcl-2 proteins, including MCL1, BCL2, BCL2L1 isoform Bcl-X(L), BCL2A1/BFL-1, BHRF1, and BCL2L2/BCLW. Does not heterodimerize with proapoptotic proteins such as BAD, BOK or BAK. Identified in a complex containing BCL2L11, DYNLL1 and BCL2L1 isoform Bcl-X(L); BH3 integrity is required for BCL2L1-binding. Interacts with YWHAZ. When phosphorylated, interacts with TRIM2; this interaction is associated with ubiquitination and degradation. Interacts with MCL1; may sequester BCL2L11 to prevent its pro-apoptotic activity. Interacts with GIMAP5. Interacts with BCL2L10/BCL-B. In terms of assembly, interacts (when phosphorylated) with USP27X; the interaction leads to BCL2L11 deubiquitination and stabilization. Interacts with humanin; the interaction prevents BIM-induced apoptosis. Does not interact with humanin. As to quaternary structure, interacts with BAX; the interaction may lead to BAX activation through conformational change. Does not interact with humanin. In terms of assembly, interacts with BAX; the interaction may lead to BAX activation through conformational change. In terms of processing, phosphorylation at Ser-69 by MAPK1/MAPK3 leads to interaction with TRIM2 and polyubiquitination, followed by proteasomal degradation. Deubiquitination catalyzed by USP27X stabilizes the protein. Ubiquitination by TRIM2 following phosphorylation by MAPK1/MAPK3 leads to proteasomal degradation. Conversely, deubiquitination catalyzed by USP27X stabilizes the protein. Isoform BimEL, isoform BimL and isoform BimS are the predominant isoforms and are widely expressed with tissue-specific variation. Isoform Bim-gamma is most abundantly expressed in small intestine and colon, and in lower levels in spleen, prostate, testis, heart, liver and kidney.

Its subcellular location is the endomembrane system. The protein localises to the mitochondrion. In terms of biological role, induces apoptosis and anoikis. Isoform BimL is more potent than isoform BimEL. Isoform Bim-alpha1, isoform Bim-alpha2 and isoform Bim-alpha3 induce apoptosis, although less potent than isoform BimEL, isoform BimL and isoform BimS. Isoform Bim-gamma induces apoptosis. Isoform Bim-alpha3 induces apoptosis possibly through a caspase-mediated pathway. Isoform BimAC and isoform BimABC lack the ability to induce apoptosis. The polypeptide is Bcl-2-like protein 11 (BCL2L11) (Homo sapiens (Human)).